Reading from the N-terminus, the 157-residue chain is Ubiquitin-like protein 4A (157 aa).

A Ubiquitin-like domain is found at 1–76; the sequence is MQLTVKALQG…LNLVVKPLEK (76 aa). Lys-48 participates in a covalent cross-link: Glycyl lysine isopeptide (Lys-Gly) (interchain with G-Cter in ubiquitin). The residue at position 90 (Ser-90) is a Phosphoserine. Positions 96-138 are required and sufficient for interaction with BAG6; the sequence is WQLISKVLARHFSAADASRVLEQLQRDYQRSLSRLTLDDIERL.

In terms of assembly, component of the BAG6/BAT3 complex, at least composed of BAG6, UBL4A and GET4/TRC35. Interacts with BAG6; the interaction is direct and required for UBL4A protein stability. Interacts with USP13; may be indirect via BAG6. Post-translationally, polyubiquitinated. Ubiquitination by AMFR and deubiquitination by USP13 may regulate the interaction between the BAG6/BAT complex and SGTA and therefore may regulate client proteins fate.

Its subcellular location is the cytoplasm. The protein localises to the cytosol. It localises to the nucleus. In terms of biological role, as part of a cytosolic protein quality control complex, the BAG6/BAT3 complex, maintains misfolded and hydrophobic patches-containing proteins in a soluble state and participates in their proper delivery to the endoplasmic reticulum or alternatively can promote their sorting to the proteasome where they undergo degradation. The BAG6/BAT3 complex is involved in the post-translational delivery of tail-anchored/type II transmembrane proteins to the endoplasmic reticulum membrane. Recruited to ribosomes, it interacts with the transmembrane region of newly synthesized tail-anchored proteins and together with SGTA and ASNA1 mediates their delivery to the endoplasmic reticulum. Client proteins that cannot be properly delivered to the endoplasmic reticulum are ubiquitinated and sorted to the proteasome. Similarly, the BAG6/BAT3 complex also functions as a sorting platform for proteins of the secretory pathway that are mislocalized to the cytosol either delivering them to the proteasome for degradation or to the endoplasmic reticulum. The BAG6/BAT3 complex also plays a role in the endoplasmic reticulum-associated degradation (ERAD), a quality control mechanism that eliminates unwanted proteins of the endoplasmic reticulum through their retrotranslocation to the cytosol and their targeting to the proteasome. It maintains these retrotranslocated proteins in an unfolded yet soluble state condition in the cytosol to ensure their proper delivery to the proteasome. This is Ubiquitin-like protein 4A (UBL4A) from Plecturocebus moloch (Dusky titi monkey).